Reading from the N-terminus, the 908-residue chain is 26S proteasome non-ATPase regulatory subunit 2 (908 aa).

The residue at position 1 (Met-1) is an N-acetylmethionine. Positions 1–52 are disordered; the sequence is MEEGGRDKAPLQPQQPPATSPGSGDEKPSGKERRDAGDKDKEQELSEEDKQL. Over residues 24 to 52 the composition is skewed to basic and acidic residues; sequence GDEKPSGKERRDAGDKDKEQELSEEDKQL. Phosphoserine is present on residues Ser-29 and Ser-147. Tyr-194 is modified (phosphotyrosine). Phosphoserine occurs at positions 361 and 363. PC repeat units lie at residues 409–442, 443–479, 480–514, 517–551, and 560–589; these read SAAA…YIKS, GALL…TMRL, GSIF…SMEV, VTAL…TELK, and LGLG…PFRS. N6-acetyllysine is present on Lys-551. Positions 623 to 643 are enriched in basic and acidic residues; the sequence is KEKEEDKDKKEKKDKDKKEAP. Positions 623-645 are disordered; sequence KEKEEDKDKKEKKDKDKKEAPAD. PC repeat units lie at residues 692 to 723 and 742 to 757; these read LALA…EVSY and AAML…KDPN. A required for interaction with UBLCP1 region spans residues 708–903; it reads DTLSKFSHDA…LEGFVILRKN (196 aa).

It belongs to the proteasome subunit S2 family. In terms of assembly, component of the 19S proteasome regulatory particle complex. The 26S proteasome consists of a 20S core particle (CP) and two 19S regulatory subunits (RP). The regulatory particle is made of a lid composed of 9 subunits, a base containing 6 ATPases and few additional components including PSMD2. Interacts with RPGRIP1L. Interacts with CRY1 in a KDM8-dependent manner. Interacts (via C-terminus) with phosphatase UBLCP1 (via ubiquitin-like domain); the interaction recruits UBLCP1 to the 19S regulatory particle where it dephosphorylates 19S subunit PSMC2/RPT1 which impairs PSMC2 ATPase activity and disrupts 26S proteasome assembly.

Its function is as follows. Component of the 26S proteasome, a multiprotein complex involved in the ATP-dependent degradation of ubiquitinated proteins. This complex plays a key role in the maintenance of protein homeostasis by removing misfolded or damaged proteins, which could impair cellular functions, and by removing proteins whose functions are no longer required. Therefore, the proteasome participates in numerous cellular processes, including cell cycle progression, apoptosis, or DNA damage repair. Functionally, binds to the intracellular domain of tumor necrosis factor type 1 receptor. The binding domain of TRAP1 and TRAP2 resides outside the death domain of TNFR1. This Bos taurus (Bovine) protein is 26S proteasome non-ATPase regulatory subunit 2 (PSMD2).